A 218-amino-acid chain; its full sequence is Superoxide dismutase [Mn] 1 (218 aa).

His43, His98, Asp180, and His184 together coordinate Mn(2+).

Belongs to the iron/manganese superoxide dismutase family. In terms of assembly, homodimer. Requires Mn(2+) as cofactor.

It catalyses the reaction 2 superoxide + 2 H(+) = H2O2 + O2. In terms of biological role, destroys superoxide anion radicals which are normally produced within the cells and which are toxic to biological systems. The chain is Superoxide dismutase [Mn] 1 (sodA1) from Bacillus cereus (strain ATCC 14579 / DSM 31 / CCUG 7414 / JCM 2152 / NBRC 15305 / NCIMB 9373 / NCTC 2599 / NRRL B-3711).